The primary structure comprises 477 residues: Probable cytosolic Fe-S cluster assembly factor GG21400 (477 aa).

[4Fe-4S] cluster is bound by residues Cys23, Cys68, Cys71, Cys74, Cys187, Cys243, Cys395, and Cys399.

Belongs to the NARF family.

Its function is as follows. Component of the cytosolic iron-sulfur (Fe/S) protein assembly machinery. Required for maturation of extramitochondrial Fe/S proteins. The sequence is that of Probable cytosolic Fe-S cluster assembly factor GG21400 from Drosophila erecta (Fruit fly).